Consider the following 310-residue polypeptide: Flavin-dependent trigonelline monooxygenase, reductase component (310 aa).

FMN contacts are provided by residues 40 to 43 (TANS), 57 to 63 (SIAKTSS), 90 to 91 (FA), and Arg-97.

The protein belongs to the non-flavoprotein flavin reductase family. Homodimer. The trigonelline monooxygenase is composed of a reductase component TgnA and an oxygenase component TgnB.

The catalysed reaction is a reduced flavin + NAD(+) = an oxidized flavin + NADH + 2 H(+). The enzyme catalyses FADH2 + NAD(+) = FAD + NADH + 2 H(+). It catalyses the reaction FMNH2 + NAD(+) = FMN + NADH + 2 H(+). Maximal reductase activity is achieved only upon trigonelline (TG) binding to the reductase component before interaction with NADH. It seems that TgnA undergoes an allosteric transition upon trigonelline (TG) binding accounting for the positive cooperativity toward NADH oxidation. In terms of biological role, involved in the degradation of the pyridine ring of trigonelline (TG; N-methylnicotinate) into succinate and methylamine as carbon and nitrogen sources, respectively. TgnA catalyzes the reduction of flavin (FMN or FAD) by NADH and supplies the reduced flavin to the oxygenase component TgnB. This is Flavin-dependent trigonelline monooxygenase, reductase component from Acinetobacter baylyi (strain ATCC 33305 / BD413 / ADP1).